The primary structure comprises 347 residues: GMP reductase (347 aa).

NADP(+) is bound at residue 108–131 (DDFTKTRQILAMSTALRFICVDVA). Positions 181 and 183 each coordinate K(+). Cys-186 (thioimidate intermediate) is an active-site residue. 216–239 (IVGDGGCTCPGDVAKAFGGGADFV) lines the NADP(+) pocket.

The protein belongs to the IMPDH/GMPR family. GuaC type 1 subfamily. Homotetramer.

The enzyme catalyses IMP + NH4(+) + NADP(+) = GMP + NADPH + 2 H(+). Functionally, catalyzes the irreversible NADPH-dependent deamination of GMP to IMP. It functions in the conversion of nucleobase, nucleoside and nucleotide derivatives of G to A nucleotides, and in maintaining the intracellular balance of A and G nucleotides. In Aeromonas salmonicida (strain A449), this protein is GMP reductase.